The sequence spans 154 residues: Myoglobin (154 aa).

The Globin domain occupies 2–148; it reads VLSDAEWQLV…FRKDIAAKYK (147 aa). Ser-4 is modified (phosphoserine). His-65 provides a ligand contact to nitrite. Position 65 (His-65) interacts with O2. Thr-68 is modified (phosphothreonine). Position 94 (His-94) interacts with heme b.

Belongs to the globin family. As to quaternary structure, monomeric.

It localises to the cytoplasm. Its subcellular location is the sarcoplasm. The enzyme catalyses Fe(III)-heme b-[protein] + nitric oxide + H2O = Fe(II)-heme b-[protein] + nitrite + 2 H(+). The catalysed reaction is H2O2 + AH2 = A + 2 H2O. Its function is as follows. Monomeric heme protein which primary function is to store oxygen and facilitate its diffusion within muscle tissues. Reversibly binds oxygen through a pentacoordinated heme iron and enables its timely and efficient release as needed during periods of heightened demand. Depending on the oxidative conditions of tissues and cells, and in addition to its ability to bind oxygen, it also has a nitrite reductase activity whereby it regulates the production of bioactive nitric oxide. Under stress conditions, like hypoxia and anoxia, it also protects cells against reactive oxygen species thanks to its pseudoperoxidase activity. In Megaptera novaeangliae (Humpback whale), this protein is Myoglobin (MB).